We begin with the raw amino-acid sequence, 462 residues long: Asparagine--tRNA ligase (462 aa).

Belongs to the class-II aminoacyl-tRNA synthetase family. As to quaternary structure, homodimer.

Its subcellular location is the cytoplasm. It catalyses the reaction tRNA(Asn) + L-asparagine + ATP = L-asparaginyl-tRNA(Asn) + AMP + diphosphate + H(+). The polypeptide is Asparagine--tRNA ligase (Synechocystis sp. (strain ATCC 27184 / PCC 6803 / Kazusa)).